A 160-amino-acid chain; its full sequence is Eosinophil cationic protein (160 aa).

A signal peptide spans 1 to 27 (MVPKLFTSQICLLLLLGLMGVEGSLHA). Residues 28–72 (RPPQFTKAQWFAIQHINVNPPRCTIAMRVINNYQRRCKNQNTFLR) are required for nearly all of the bactericidal activities; partially involved in LPS-binding. Catalysis depends on His42, which acts as the Proton acceptor. Intrachain disulfides connect Cys50-Cys110, Cys64-Cys123, Cys82-Cys138, and Cys89-Cys98. Tyr60 is subject to 3'-nitrotyrosine. 65-69 (KNQNT) is a binding site for substrate. Asn92 and Asn119 each carry an N-linked (GlcNAc...) asparagine glycan. The active-site Proton donor is His155.

This sequence belongs to the pancreatic ribonuclease family. In terms of assembly, interacts with bacterial lipopolysaccharide (LPS) and lipoteichoic acid (LTA). In vitro interacts with phospholipid bilayers.

Its subcellular location is the secreted. Functionally, cytotoxin and helminthotoxin with low-efficiency ribonuclease activity. Possesses a wide variety of biological activities. Exhibits antibacterial activity. This Macaca fascicularis (Crab-eating macaque) protein is Eosinophil cationic protein (RNASE3).